Consider the following 459-residue polypeptide: ERBB receptor feedback inhibitor 1 (459 aa).

Ser2 is modified (N-acetylserine). 2 positions are modified to phosphothreonine: Thr126 and Thr130. The interval 227 to 352 (QNRVVPDPNP…VMPPTQSFAP (126 aa)) is disordered. Residues Ser250 and Ser271 each carry the phosphoserine modification. Residues 264-273 (SSCTHRASPS) show a composition bias toward polar residues. Over residues 282 to 291 (PPRVPIPPRP) the composition is skewed to pro residues. Ser300 is subject to Phosphoserine. Residues 310 to 323 (DEDRPPKVPPREPL) show a composition bias toward basic and acidic residues. The span at 324-335 (SRSNSRTPSPKS) shows a compositional bias: polar residues. The tract at residues 332–361 (SPKSLPSYLNGVMPPTQSFAPDPKYVSSKA) is interaction with EGFR and ERBB2 and regulation of EGFR activation. Ser458 bears the Phosphoserine mark.

Belongs to the MIG6 family. Interacts with EGFR and ERBB2.

Its subcellular location is the cytoplasm. It is found in the cell membrane. The protein localises to the nucleus. Functionally, negative regulator of EGFR signaling in skin morphogenesis. Acts as a negative regulator for several EGFR family members, including ERBB2, ERBB3 and ERBB4. Inhibits EGFR catalytic activity by interfering with its dimerization. Inhibits autophosphorylation of EGFR, ERBB2 and ERBB4. Important for normal keratinocyte proliferation and differentiation. Plays a role in modulating the response to steroid hormones in the uterus. Required for normal response to progesterone in the uterus and for fertility. Mediates epithelial estrogen responses in the uterus by regulating ESR1 levels and activation. Important for regulation of endometrium cell proliferation. Important for normal prenatal and perinatal lung development. This is ERBB receptor feedback inhibitor 1 (Errfi1) from Rattus norvegicus (Rat).